Here is a 255-residue protein sequence, read N- to C-terminus: Phosphate import ATP-binding protein PstB (255 aa).

The region spanning 10–250 (INIKDLNLWY…PQMKSTEDYI (241 aa)) is the ABC transporter domain. Residue 42 to 49 (GPSGCGKS) coordinates ATP.

It belongs to the ABC transporter superfamily. Phosphate importer (TC 3.A.1.7) family. The complex is composed of two ATP-binding proteins (PstB), two transmembrane proteins (PstC and PstA) and a solute-binding protein (PstS).

It is found in the cell membrane. It carries out the reaction phosphate(out) + ATP + H2O = ADP + 2 phosphate(in) + H(+). Part of the ABC transporter complex PstSACB involved in phosphate import. Responsible for energy coupling to the transport system. This is Phosphate import ATP-binding protein PstB from Methanococcoides burtonii (strain DSM 6242 / NBRC 107633 / OCM 468 / ACE-M).